We begin with the raw amino-acid sequence, 1113 residues long: StAR-related lipid transfer protein 13 (1113 aa).

N-acetylmethionine is present on M1. In terms of domain architecture, SAM spans 55 to 122 (QQEIEAKEAC…LNKCASMKLD (68 aa)). 2 disordered regions span residues 162–254 (LLPR…PTRA) and 307–346 (PNGD…VSTP). Polar residues predominate over residues 177 to 188 (MRNTTSSESVLT). Low complexity-rich tracts occupy residues 197 to 213 (SIHS…SQPG) and 326 to 344 (SGKS…SGVS). A Phosphoserine modification is found at S411. Residues 536-549 (FEGNSVSEGRTTPS) show a composition bias toward polar residues. The segment at 536 to 580 (FEGNSVSEGRTTPSDVERDVTSLNESEPPGVRDRRDSGVGASLTR) is disordered. One can recognise a Rho-GAP domain in the interval 663-868 (VPLIVHVQRT…HMIMECDRLF (206 aa)). Positions 899–1107 (LEESGATFHT…RNSFQPLIAE (209 aa)) constitute an START domain.

In terms of assembly, homodimer. Interacts with TAX1BP1. Ubiquitously expressed. Underexpressed in hepatocellular carcinoma cells and some breast cancer cell lines.

The protein resides in the cytoplasm. The protein localises to the membrane. It is found in the mitochondrion membrane. It localises to the lipid droplet. GTPase-activating protein for RhoA, and perhaps for Cdc42. May be involved in regulation of cytoskeletal reorganization, cell proliferation and cell motility. Acts a tumor suppressor in hepatocellular carcinoma cells. This Homo sapiens (Human) protein is StAR-related lipid transfer protein 13 (STARD13).